Reading from the N-terminus, the 127-residue chain is Large ribosomal subunit protein bL17 (127 aa).

The protein belongs to the bacterial ribosomal protein bL17 family. In terms of assembly, part of the 50S ribosomal subunit. Contacts protein L32.

In Lactobacillus johnsonii (strain CNCM I-12250 / La1 / NCC 533), this protein is Large ribosomal subunit protein bL17.